Reading from the N-terminus, the 147-residue chain is Protein phosphatase 1 regulatory subunit 14A (147 aa).

The segment covering 1–11 has biased composition (basic residues); the sequence is MAAQRLGKRVL. The tract at residues 1–37 is disordered; sequence MAAQRLGKRVLSKLQSPSRARGPGGSPGGLQKRHARV. The residue at position 26 (serine 26) is a Phosphoserine. Residues 35–120 are inhibitory; it reads ARVTVKYDRR…LLVKLRGLHK (86 aa). Threonine 38 is subject to Phosphothreonine. Residues 118–147 form a disordered region; that stretch reads LHKQPGLRQPSPSGDGSLSPRQDRARTAPP. Residues 127 to 137 are compositionally biased toward polar residues; it reads PSPSGDGSLSP. Phosphoserine is present on residues serine 128, serine 134, and serine 136. Basic and acidic residues predominate over residues 138–147; the sequence is RQDRARTAPP.

This sequence belongs to the PP1 inhibitor family. Post-translationally, phosphorylation of Thr-38 induces a conformation change. In terms of tissue distribution, detected in aorta smooth muscle and bladder.

It is found in the cytoplasm. Functionally, inhibitor of PPP1CA. Has over 1000-fold higher inhibitory activity when phosphorylated, creating a molecular switch for regulating the phosphorylation status of PPP1CA substrates and smooth muscle contraction. This is Protein phosphatase 1 regulatory subunit 14A (CPI17) from Sus scrofa (Pig).